Here is a 332-residue protein sequence, read N- to C-terminus: ATP-dependent 6-phosphofructokinase (332 aa).

Glycine 11 contacts ATP. 21 to 25 (RSVVR) is an ADP binding site. ATP is bound by residues 72–73 (RC) and 102–105 (GDGS). Aspartate 103 is a Mg(2+) binding site. 126-128 (TID) is a binding site for substrate. Catalysis depends on aspartate 128, which acts as the Proton acceptor. Arginine 155 contacts ADP. Residues arginine 163 and 170–172 (MGR) each bind substrate. ADP-binding positions include 186 to 188 (GAE), arginine 212, and 214 to 216 (KLH). Residues glutamate 223, arginine 256, and 262–265 (HIQR) contribute to the substrate site.

Belongs to the phosphofructokinase type A (PFKA) family. ATP-dependent PFK group I subfamily. Prokaryotic clade 'B1' sub-subfamily. As to quaternary structure, homotetramer. It depends on Mg(2+) as a cofactor.

Its subcellular location is the cytoplasm. It catalyses the reaction beta-D-fructose 6-phosphate + ATP = beta-D-fructose 1,6-bisphosphate + ADP + H(+). It functions in the pathway carbohydrate degradation; glycolysis; D-glyceraldehyde 3-phosphate and glycerone phosphate from D-glucose: step 3/4. Allosterically activated by ADP and other diphosphonucleosides, and allosterically inhibited by phosphoenolpyruvate. In terms of biological role, catalyzes the phosphorylation of D-fructose 6-phosphate to fructose 1,6-bisphosphate by ATP, the first committing step of glycolysis. This chain is ATP-dependent 6-phosphofructokinase, found in Halothermothrix orenii (strain H 168 / OCM 544 / DSM 9562).